A 378-amino-acid chain; its full sequence is Beta sliding clamp (378 aa).

Belongs to the beta sliding clamp family. In terms of assembly, forms a ring-shaped head-to-tail homodimer around DNA which binds and tethers DNA polymerases and other proteins to the DNA. The DNA replisome complex has a single clamp-loading complex (3 tau and 1 each of delta, delta', psi and chi subunits) which binds 3 Pol III cores (1 core on the leading strand and 2 on the lagging strand) each with a beta sliding clamp dimer. Additional proteins in the replisome are other copies of gamma, psi and chi, Ssb, DNA helicase and RNA primase.

The protein resides in the cytoplasm. Functionally, confers DNA tethering and processivity to DNA polymerases and other proteins. Acts as a clamp, forming a ring around DNA (a reaction catalyzed by the clamp-loading complex) which diffuses in an ATP-independent manner freely and bidirectionally along dsDNA. Initially characterized for its ability to contact the catalytic subunit of DNA polymerase III (Pol III), a complex, multichain enzyme responsible for most of the replicative synthesis in bacteria; Pol III exhibits 3'-5' exonuclease proofreading activity. The beta chain is required for initiation of replication as well as for processivity of DNA replication. This Streptococcus pneumoniae serotype 4 (strain ATCC BAA-334 / TIGR4) protein is Beta sliding clamp (dnaN).